We begin with the raw amino-acid sequence, 174 residues long: MVDPQSPITPHLYPQAIQLKLYQAFIFSIPILFSIILFLLFYLFYLKRRASSLSSPSPMILPVSSSHQTSSHLPSVCLLDVKVELKDKLHVVLFNEELGTRDSLCCVCLGEFELKEELVEMPLCKHIFHLDCIHLWLYSHNTCPLCRSSVSISSTKTSVDDDNDHPDSPQTSPV.

The segment at 105-147 (CCVCLGEFELKEELVEMPLCKHIFHLDCIHLWLYSHNTCPLCR) adopts an RING-type; atypical zinc-finger fold. The tract at residues 155-174 (TKTSVDDDNDHPDSPQTSPV) is disordered.

Expressed in stems, flowers, cauline leaves and roots.

The catalysed reaction is S-ubiquitinyl-[E2 ubiquitin-conjugating enzyme]-L-cysteine + [acceptor protein]-L-lysine = [E2 ubiquitin-conjugating enzyme]-L-cysteine + N(6)-ubiquitinyl-[acceptor protein]-L-lysine.. The protein operates within protein modification; protein ubiquitination. Its function is as follows. Probable E3 ubiquitin-protein ligase that may possess E3 ubiquitin ligase activity in vitro. The sequence is that of Probable E3 ubiquitin-protein ligase RHA4A from Arabidopsis thaliana (Mouse-ear cress).